A 577-amino-acid polypeptide reads, in one-letter code: Urease subunit alpha (577 aa).

One can recognise a Urease domain in the interval 136–577; that stretch reads GTVDCHVHLI…LPMTQRYFLF (442 aa). Residues H141, H143, and K224 each coordinate Ni(2+). The residue at position 224 (K224) is an N6-carboxylysine. Substrate is bound at residue H226. Residues H253 and H279 each coordinate Ni(2+). H327 (proton donor) is an active-site residue. D367 provides a ligand contact to Ni(2+).

Belongs to the metallo-dependent hydrolases superfamily. Urease alpha subunit family. As to quaternary structure, heterotrimer of UreA (gamma), UreB (beta) and UreC (alpha) subunits. Three heterotrimers associate to form the active enzyme. Ni cation is required as a cofactor. In terms of processing, carboxylation allows a single lysine to coordinate two nickel ions.

It localises to the cytoplasm. The enzyme catalyses urea + 2 H2O + H(+) = hydrogencarbonate + 2 NH4(+). It functions in the pathway nitrogen metabolism; urea degradation; CO(2) and NH(3) from urea (urease route): step 1/1. The protein is Urease subunit alpha of Mycobacterium bovis (strain ATCC BAA-935 / AF2122/97).